The following is a 444-amino-acid chain: tRNA modification GTPase MnmE (444 aa).

(6S)-5-formyl-5,6,7,8-tetrahydrofolate is bound by residues Arg23, Glu82, and Lys121. A TrmE-type G domain is found at 216-365; it reads GTSIVLAGLP…LKQALQKWLN (150 aa). Asn226 serves as a coordination point for K(+). GTP contacts are provided by residues 226-231, 245-251, and 270-273; these read NAGKSS, TDIPGTT, and DSAG. A Mg(2+)-binding site is contributed by Ser230. K(+) contacts are provided by Thr245, Ile247, and Thr250. Residue Thr251 participates in Mg(2+) binding. Residue Lys444 participates in (6S)-5-formyl-5,6,7,8-tetrahydrofolate binding.

Belongs to the TRAFAC class TrmE-Era-EngA-EngB-Septin-like GTPase superfamily. TrmE GTPase family. In terms of assembly, homodimer. Heterotetramer of two MnmE and two MnmG subunits. The cofactor is K(+).

It localises to the cytoplasm. Functionally, exhibits a very high intrinsic GTPase hydrolysis rate. Involved in the addition of a carboxymethylaminomethyl (cmnm) group at the wobble position (U34) of certain tRNAs, forming tRNA-cmnm(5)s(2)U34. The polypeptide is tRNA modification GTPase MnmE (Chlamydia trachomatis serovar L2 (strain ATCC VR-902B / DSM 19102 / 434/Bu)).